We begin with the raw amino-acid sequence, 293 residues long: 4-hydroxy-tetrahydrodipicolinate synthase (293 aa).

Residue threonine 47 participates in pyruvate binding. Residue tyrosine 135 is the Proton donor/acceptor of the active site. Lysine 164 (schiff-base intermediate with substrate) is an active-site residue. Isoleucine 206 serves as a coordination point for pyruvate.

The protein belongs to the DapA family. As to quaternary structure, homotetramer; dimer of dimers.

It is found in the cytoplasm. It catalyses the reaction L-aspartate 4-semialdehyde + pyruvate = (2S,4S)-4-hydroxy-2,3,4,5-tetrahydrodipicolinate + H2O + H(+). It participates in amino-acid biosynthesis; L-lysine biosynthesis via DAP pathway; (S)-tetrahydrodipicolinate from L-aspartate: step 3/4. Catalyzes the condensation of (S)-aspartate-beta-semialdehyde [(S)-ASA] and pyruvate to 4-hydroxy-tetrahydrodipicolinate (HTPA). In Flavobacterium psychrophilum (strain ATCC 49511 / DSM 21280 / CIP 103535 / JIP02/86), this protein is 4-hydroxy-tetrahydrodipicolinate synthase.